The chain runs to 408 residues: Peptidase T (408 aa).

His78 lines the Zn(2+) pocket. Residue Asp80 is part of the active site. Residue Asp140 participates in Zn(2+) binding. Residue Glu173 is the Proton acceptor of the active site. Zn(2+) is bound by residues Glu174, Asp196, and His379.

The protein belongs to the peptidase M20B family. Zn(2+) is required as a cofactor.

It is found in the cytoplasm. The enzyme catalyses Release of the N-terminal residue from a tripeptide.. In terms of biological role, cleaves the N-terminal amino acid of tripeptides. This chain is Peptidase T, found in Escherichia fergusonii (strain ATCC 35469 / DSM 13698 / CCUG 18766 / IAM 14443 / JCM 21226 / LMG 7866 / NBRC 102419 / NCTC 12128 / CDC 0568-73).